The chain runs to 251 residues: L,D-transpeptidase 1 (251 aa).

Positions 1-28 are cleaved as a signal peptide; that stretch reads MRRVVRYLSVVVAITLMLTAESVSIATA. The region spanning 125–250 is the L,D-TPase catalytic domain; sequence LIGVASISAH…VTVGDPIEVV (126 aa). Residues Tyr190 and 203–204 contribute to the substrate site; that span reads SG. The Proton donor/acceptor role is filled by His208. Cys226 acts as the Nucleophile in catalysis. Residue Asn228 coordinates substrate.

Monomer.

It is found in the periplasm. Its pathway is cell wall biogenesis; peptidoglycan biosynthesis. Is irreversibly inactivated by the beta-lactams carbapenems via the formation of a covalent adduct resulting from acylation of the catalytic Cys. Its function is as follows. Generates 3-&gt;3 cross-links in peptidoglycan, catalyzing the cleavage of the mDap(3)-D-Ala(4) bond of a tetrapeptide donor stem and the formation of a bond between the carbonyl of mDap(3) of the donor stem and the side chain of mDap(3) of the acceptor stem. Is specific for donor substrates containing a stem tetrapeptide since it cannot use pentapeptide stems. The protein is L,D-transpeptidase 1 (ldtA) of Mycobacterium tuberculosis (strain CDC 1551 / Oshkosh).